We begin with the raw amino-acid sequence, 313 residues long: Ribonuclease Z (313 aa).

Residues histidine 63, histidine 65, aspartate 67, histidine 68, histidine 142, aspartate 212, and histidine 270 each contribute to the Zn(2+) site. Aspartate 67 acts as the Proton acceptor in catalysis.

This sequence belongs to the RNase Z family. As to quaternary structure, homodimer. Requires Zn(2+) as cofactor.

It catalyses the reaction Endonucleolytic cleavage of RNA, removing extra 3' nucleotides from tRNA precursor, generating 3' termini of tRNAs. A 3'-hydroxy group is left at the tRNA terminus and a 5'-phosphoryl group is left at the trailer molecule.. Zinc phosphodiesterase, which displays some tRNA 3'-processing endonuclease activity. Probably involved in tRNA maturation, by removing a 3'-trailer from precursor tRNA. This Enterococcus faecalis (strain ATCC 700802 / V583) protein is Ribonuclease Z.